The chain runs to 171 residues: MPLLDSFTVDHTRMNAPAVRVAKTMKTPHGDTITVFDLRFCIPNKQVMPEKGIHTLEHLFAGFMRNHLNGEGVEIIDISPMGCRTGFYMSLIGEPAEVRVADAWKAAMADVLKVKDQSQIPELNIYQCGTYHMHSLTEAQDIAHHILDSDVLVNKNDELALPEEKLTELKV.

Residues histidine 54, histidine 58, and cysteine 128 each coordinate Fe cation.

It belongs to the LuxS family. As to quaternary structure, homodimer. Fe cation serves as cofactor.

It carries out the reaction S-(5-deoxy-D-ribos-5-yl)-L-homocysteine = (S)-4,5-dihydroxypentane-2,3-dione + L-homocysteine. In terms of biological role, involved in the synthesis of autoinducer 2 (AI-2) which is secreted by bacteria and is used to communicate both the cell density and the metabolic potential of the environment. The regulation of gene expression in response to changes in cell density is called quorum sensing. Catalyzes the transformation of S-ribosylhomocysteine (RHC) to homocysteine (HC) and 4,5-dihydroxy-2,3-pentadione (DPD). This is S-ribosylhomocysteine lyase from Photorhabdus laumondii subsp. laumondii (strain DSM 15139 / CIP 105565 / TT01) (Photorhabdus luminescens subsp. laumondii).